The sequence spans 468 residues: uncharacterized protein (468 aa).

The disordered stretch occupies residues 447 to 468 (AVHVSNGDKPKVALPDTQLGSH).

The protein belongs to the mycobacterial PPE family.

This is an uncharacterized protein from Mycobacterium tuberculosis (strain ATCC 25618 / H37Rv).